Consider the following 416-residue polypeptide: Tryptophan synthase beta chain (416 aa).

The disordered stretch occupies residues 1–23 (MTSTLPSQPKDMELANSSRPSVH). N6-(pyridoxal phosphate)lysine is present on Lys-109.

Belongs to the TrpB family. Tetramer of two alpha and two beta chains. The cofactor is pyridoxal 5'-phosphate.

It carries out the reaction (1S,2R)-1-C-(indol-3-yl)glycerol 3-phosphate + L-serine = D-glyceraldehyde 3-phosphate + L-tryptophan + H2O. The protein operates within amino-acid biosynthesis; L-tryptophan biosynthesis; L-tryptophan from chorismate: step 5/5. In terms of biological role, the beta subunit is responsible for the synthesis of L-tryptophan from indole and L-serine. In Prochlorococcus marinus (strain MIT 9211), this protein is Tryptophan synthase beta chain.